Reading from the N-terminus, the 486-residue chain is MTHYIQGQWHAGKGHDVASMNPANTHTIWTGKTATAEQVNAAVDAARAAQFDWFMLGFDARLAIVETYRSQLEANKAELAETIAQETGKPQWETATEVGAMIGKIALSAAAYNKRTGTEANDTPAGRAVIRHKPHGVVAVFGPYNFPGHLPNGHIVPALLAGNTVIFKPSELTPKVAELMVSLWDKAGLPAGVLNLVQGEVDTGKALASHPQLDGLFFTGSSRTGHFLHQQYAGHPGKILALEMGGNNPLIIKGVQDIKAAVHDILQSAYISSGQRCTCARRLYVEQGEQGDALIAMLADAVKQIKVGPWNSQPQPFMGSMISETAAKGMVAAQANLLNLGGVSLVELTHLEAGTGLVSPGLIDVTAIDALPDEEYFGPLLQLVRYSDFDQAIKLANQTRYGLSAGLLADSREDYDYFLARIRAGIVNWNKQITGASGAAPFGGVGASGNHRASAFYAADYCAYPVASVEADTVSLPATLSPGLSL.

220–225 (GSSRTG) provides a ligand contact to NAD(+). Residues E243 and C277 contribute to the active site.

This sequence belongs to the aldehyde dehydrogenase family. AstD subfamily.

The catalysed reaction is N-succinyl-L-glutamate 5-semialdehyde + NAD(+) + H2O = N-succinyl-L-glutamate + NADH + 2 H(+). It functions in the pathway amino-acid degradation; L-arginine degradation via AST pathway; L-glutamate and succinate from L-arginine: step 4/5. In terms of biological role, catalyzes the NAD-dependent reduction of succinylglutamate semialdehyde into succinylglutamate. The sequence is that of N-succinylglutamate 5-semialdehyde dehydrogenase from Shewanella baltica (strain OS223).